Consider the following 170-residue polypeptide: Universal stress protein MJ0531 (170 aa).

Belongs to the universal stress protein A family.

This is Universal stress protein MJ0531 from Methanocaldococcus jannaschii (strain ATCC 43067 / DSM 2661 / JAL-1 / JCM 10045 / NBRC 100440) (Methanococcus jannaschii).